The chain runs to 509 residues: Cruciferin CRU1 (509 aa).

The signal sequence occupies residues 1–23 (MVKVPHLLVATFGVLLVLNGCLA). Residues cysteine 37 and cysteine 70 are joined by a disulfide bond. Residues 42-271 (LDVLQPTETI…ALKIDVRLAQ (230 aa)) enclose the Cupin type-1 1 domain. A phosphoserine mark is found at serine 53 and serine 97. The cysteines at positions 113 and 326 are disulfide-linked. The residue at position 116 (threonine 116) is a Phosphothreonine. Disordered stretches follow at residues 119-175 (DSQP…GFRD), 230-249 (RLAG…QQQN), and 301-321 (YESE…DNGL). Over residues 124–172 (QGQQQGQPWQGQQGQQGQQGQQGQQGQQGQQGQQGQQGQQGQQGQQQQG) the composition is skewed to low complexity. In terms of domain architecture, Cupin type-1 2 spans 332–481 (ENIDDPARAD…AFQISLEEAR (150 aa)). Serine 352 bears the Phosphoserine mark. Threonine 445 and threonine 487 each carry phosphothreonine.

This sequence belongs to the 11S seed storage protein (globulins) family. As to quaternary structure, hexamer; each subunit is composed of an acidic and a basic chain derived from a single precursor and linked by a disulfide bond.

This is a seed storage protein. This Brassica napus (Rape) protein is Cruciferin CRU1 (CRU1).